The sequence spans 199 residues: Phosphatidylethanolamine N-methyltransferase (199 aa).

At 2 to 12 (SWLLGYVDPTE) the chain is on the lumenal side. The helical intramembrane region spans 13–33 (PSFVAAVLTIVFNPLFWNVVA). The Lumenal segment spans residues 34–45 (RWEQRTRKLSRA). Residues 46–66 (FGSPYLACYSLGSIILLLNIL) traverse the membrane as a helical segment. The Cytoplasmic portion of the chain corresponds to 67–93 (RSHCFTQAMMSQPKMEGLDSHTIYFLG). Residues 94–114 (LALLGWGLVFVLSSFYALGFT) traverse the membrane as a helical segment. 98–100 (GWG) contributes to the S-adenosyl-L-methionine binding site. At 115 to 157 (GTFLGDYFGILKESRVTTFPFSVLDNPMYWGSTANYLGWALMH) the chain is on the lumenal side. The helical transmembrane segment at 158–178 (ASPTGLLLTVLVALVYVVALL) threads the bilayer. At 179–199 (FEEPFTAEIYRRKATRLHKRS) the chain is on the cytoplasmic side. 180–181 (EE) is a binding site for S-adenosyl-L-methionine.

It belongs to the class VI-like SAM-binding methyltransferase superfamily. PEMT/PEM2 methyltransferase family. As to expression, expressed in liver (at protein level).

It localises to the endoplasmic reticulum membrane. The protein localises to the mitochondrion membrane. The catalysed reaction is a 1,2-diacyl-sn-glycero-3-phosphoethanolamine + S-adenosyl-L-methionine = a 1,2-diacyl-sn-glycero-3-phospho-N-methylethanolamine + S-adenosyl-L-homocysteine + H(+). It catalyses the reaction a 1,2-diacyl-sn-glycero-3-phospho-N-methylethanolamine + S-adenosyl-L-methionine = a 1,2-diacyl-sn-glycero-3-phospho-N,N-dimethylethanolamine + S-adenosyl-L-homocysteine + H(+). It carries out the reaction a 1,2-diacyl-sn-glycero-3-phospho-N,N-dimethylethanolamine + S-adenosyl-L-methionine = a 1,2-diacyl-sn-glycero-3-phosphocholine + S-adenosyl-L-homocysteine + H(+). The enzyme catalyses 1,2-di-(9Z-octadecenoyl)-sn-glycero-3-phosphoethanolamine + S-adenosyl-L-methionine = 1,2-di-(9Z-octadecenoyl)-sn-glycero-3-phospho-N-methylethanolamine + S-adenosyl-L-homocysteine + H(+). The catalysed reaction is 1,2-di-(9Z-octadecenoyl)-sn-glycero-3-phospho-N-methylethanolamine + S-adenosyl-L-methionine = 1,2-di-(9Z-octadecenoyl)-sn-glycero-3-phospho-N,N-dimethylethanolamine + S-adenosyl-L-homocysteine + H(+). It catalyses the reaction 1,2-di-(9Z-octadecenoyl)-sn-glycero-3-phospho-N,N-dimethylethanolamine + S-adenosyl-L-methionine = 1,2-di-(9Z-octadecenoyl)-sn-glycero-3-phosphocholine + S-adenosyl-L-homocysteine + H(+). It carries out the reaction 1,2-di-(9Z,12Z-octadecadienoyl)-sn-glycero-3-phosphoethanolamine + S-adenosyl-L-methionine = 1,2-di-(9Z,12Z-octadecadienoyl)-sn-glycero-3-phospho-N-methylethanolamine + S-adenosyl-L-homocysteine + H(+). The enzyme catalyses 1,2-di-(9Z,12Z-octadecadienoyl)-sn-glycero-3-phospho-N-methylethanolamine + S-adenosyl-L-methionine = 1,2-di-(9Z,12Z-octadecadienoyl)-sn-glycero-3-phospho-N,N-dimethylethanolamine + S-adenosyl-L-homocysteine + H(+). The catalysed reaction is 1,2-di-(9Z,12Z-octadecadienoyl)-sn-glycero-3-phospho-N,N-dimethylethanolamine + S-adenosyl-L-methionine = 1,2-di-(9Z,12Z-octadecadienoyl)-sn-glycero-3-phosphocholine + S-adenosyl-L-homocysteine + H(+). It catalyses the reaction 1,2-di-(9Z,12Z,15Z-octadecatrienoyl)-sn-glycero-3-phosphoethanolamine + S-adenosyl-L-methionine = 1,2-di-(9Z,12Z,15Z-octadecatrienoyl)-sn-glycero-3-phospho-N-methylethanolamine + S-adenosyl-L-homocysteine + H(+). It carries out the reaction 1,2-di-(9Z,12Z,15Z-octadecatrienoyl)-sn-glycero-3-phospho-N-methylethanolamine + S-adenosyl-L-methionine = 1,2-di-(9Z,12Z,15Z-octadecatrienoyl)-sn-glycero-3-phospho-N,N-dimethylethanolamine + S-adenosyl-L-homocysteine + H(+). The enzyme catalyses 1,2-di-(9Z,12Z,15Z-octadecatrienoyl)-sn-glycero-3-phospho-N,N-dimethylethanolamine + S-adenosyl-L-methionine = 1,2-di-(9Z,12Z,15Z-octadecatrienoyl)-sn-glycero-3-phosphocholine + S-adenosyl-L-homocysteine + H(+). The catalysed reaction is 1-hexadecanoyl-2-(4Z,7Z,10Z,13Z,16Z,19Z-docosahexaenoyl)-sn-glycero-3-phosphoethanolamine + S-adenosyl-L-methionine = 1-hexadecanoyl-2-(4Z,7Z,10Z,13Z,16Z,19Z-docosahexaenoyl)-sn-glycero-3-phospho-N-methylethanolamine + S-adenosyl-L-homocysteine + H(+). It catalyses the reaction 1-hexadecanoyl-2-(4Z,7Z,10Z,13Z,16Z,19Z-docosahexaenoyl)-sn-glycero-3-phospho-N-methylethanolamine + S-adenosyl-L-methionine = 1-hexadecanoyl-2-(4Z,7Z,10Z,13Z,16Z,19Z-docosahexaenoyl)-sn-glycero-3-phospho-N,N-dimethylethanolamine + S-adenosyl-L-homocysteine + H(+). It carries out the reaction 1-hexadecanoyl-2-(4Z,7Z,10Z,13Z,16Z,19Z-docosahexaenoyl)-sn-glycero-3-phospho-N,N-dimethylethanolamine + S-adenosyl-L-methionine = 1-hexadecanoyl-2-(4Z,7Z,10Z,13Z,16Z,19Z-docosahexaenoyl)-sn-glycero-3-phosphocholine + S-adenosyl-L-homocysteine + H(+). It functions in the pathway phospholipid metabolism; phosphatidylcholine biosynthesis. In terms of biological role, catalyzes the three sequential steps of the methylation pathway for the biosynthesis of phosphatidylcholine, a critical and essential component for membrane structure. Uses S-adenosylmethionine (S-adenosyl-L-methionine, SAM or AdoMet) as the methyl group donor for the methylation of phosphatidylethanolamine (1,2-diacyl-sn-glycero-3-phosphoethanolamine, PE) to phosphatidylmonomethylethanolamine (1,2-diacyl-sn-glycero-3-phospho-N-methylethanolamine, PMME), PMME to phosphatidyldimethylethanolamine (1,2-diacyl-sn-glycero-3-phospho-N,N-dimethylethanolamine, PDME), and PDME to phosphatidylcholine (1,2-diacyl-sn-glycero-3-phosphocholine, PC), producing S-adenosyl-L-homocysteine in each step. The sequence is that of Phosphatidylethanolamine N-methyltransferase from Rattus norvegicus (Rat).